The following is a 986-amino-acid chain: Translation initiation factor IF-2 (986 aa).

Positions 75 to 94 are enriched in basic and acidic residues; it reads KRLSRLEEQSRKTYEKEQHL. Disordered regions lie at residues 75–105, 127–148, 185–258, and 277–394; these read KRLSRLEEQSRKTYEKEQHLSETLSPPAPPL, PPSKPLEIPVAETPASEEPDAP, SEVP…VSFD, and GRHK…HEED. 2 stretches are compositionally biased toward low complexity: residues 185-210 and 218-235; these read SEVPESQVLPESRVLPESQVLSESPL and SEPQEQQELPELPELPEI. Residues 292 to 313 are compositionally biased toward basic and acidic residues; the sequence is DALKDEFEPKPAEESRVEEKVV. The segment covering 315–338 has biased composition (low complexity); it reads AKKPPVKAAADVKPKPVVADSSSS. Basic residues predominate over residues 339-348; that stretch reads AKKKGKKKKK. The region spanning 483-653 is the tr-type G domain; sequence TRPPVVTIMG…LTEAEMRELR (171 aa). The segment at 492-499 is G1; that stretch reads GHVDHGKT. Residue 492–499 coordinates GTP; that stretch reads GHVDHGKT. Residues 517-521 are G2; the sequence is GITQH. The G3 stretch occupies residues 539–542; sequence DTPG. GTP is bound by residues 539 to 543 and 593 to 596; these read DTPGH and NKID. The segment at 593–596 is G4; sequence NKID. Residues 629–631 form a G5 region; the sequence is SAK.

Belongs to the TRAFAC class translation factor GTPase superfamily. Classic translation factor GTPase family. IF-2 subfamily.

It localises to the cytoplasm. One of the essential components for the initiation of protein synthesis. Protects formylmethionyl-tRNA from spontaneous hydrolysis and promotes its binding to the 30S ribosomal subunits. Also involved in the hydrolysis of GTP during the formation of the 70S ribosomal complex. This is Translation initiation factor IF-2 from Pelodictyon phaeoclathratiforme (strain DSM 5477 / BU-1).